We begin with the raw amino-acid sequence, 51 residues long: Insulin (51 aa).

3 disulfides stabilise this stretch: Cys-7–Cys-36, Cys-19–Cys-49, and Cys-35–Cys-40.

This sequence belongs to the insulin family. Heterodimer of a B chain and an A chain linked by two disulfide bonds.

Its subcellular location is the secreted. Functionally, insulin decreases blood glucose concentration. It increases cell permeability to monosaccharides, amino acids and fatty acids. It accelerates glycolysis, the pentose phosphate cycle, and glycogen synthesis in liver. This chain is Insulin (INS), found in Myocastor coypus (Coypu).